Reading from the N-terminus, the 119-residue chain is Methylglyoxal synthase (119 aa).

One can recognise an MGS-like domain in the interval Met-1–Phe-119. Residues His-8, Lys-12, Thr-34 to Thr-37, and Ser-54 to Gly-55 each bind substrate. Asp-60 acts as the Proton donor/acceptor in catalysis. His-87 serves as a coordination point for substrate.

This sequence belongs to the methylglyoxal synthase family.

It catalyses the reaction dihydroxyacetone phosphate = methylglyoxal + phosphate. Catalyzes the formation of methylglyoxal from dihydroxyacetone phosphate. The protein is Methylglyoxal synthase of Clostridium botulinum (strain Alaska E43 / Type E3).